The following is a 404-amino-acid chain: Voltage-gated potassium channel subunit beta-3 (404 aa).

The span at Met1–Ser14 shows a compositional bias: polar residues. The tract at residues Met1–Met78 is disordered. The span at Pro28–Gly50 shows a compositional bias: gly residues. The NADP(+) site is built by Thr97, Trp98, Gln104, and Asp126. The active-site Proton donor/acceptor is the Tyr131. NADP(+)-binding residues include Asn199, Ser229, Arg230, Gln255, Trp284, Ser285, Pro286, Leu287, Ala288, Cys289, Lys295, Lys305, Gly364, Ser366, Gln370, and Glu373.

The protein belongs to the shaker potassium channel beta subunit family. In terms of assembly, forms heteromultimeric complex with alpha subunits. Interacts with KCNA5 and KCNB2. Predominantly expressed in brain. Strongest expression in olfactory bulb and thalamic nuclei. Not detected in heart, spleen, lung, liver, skeletal muscle, kidney and testis.

It localises to the cytoplasm. Functionally, regulatory subunit of the voltage-gated potassium (Kv) channels composed of pore-forming and potassium-conducting alpha subunits and of regulatory beta subunits. The beta-3/KCNAB3 subunit may mediate closure of potassium channels. Inactivates Kv1.4/KCNA4 alpha subunit-containing Kv channel current but not Kv1.1/KCNA1 or Kv1.5/KCNA5 channels. May display nicotinamide adenine dinucleotide phosphate (NADPH)-dependent aldoketoreductase activity. The binding of oxidized and reduced NADP(H) cofactors may be required for the regulation of potassium channel activity. This is Voltage-gated potassium channel subunit beta-3 from Rattus norvegicus (Rat).